We begin with the raw amino-acid sequence, 128 residues long: Putative transmembrane protein 244 (128 aa).

Helical transmembrane passes span 17–37 (FLLC…MGCV), 65–85 (VLLV…VPVV), and 93–113 (AISV…EFPL).

Its subcellular location is the membrane. This is Putative transmembrane protein 244 (TMEM244) from Homo sapiens (Human).